A 220-amino-acid chain; its full sequence is Putative respiratory nitrate reductase subunit Rieske (220 aa).

In terms of domain architecture, Rieske spans lysine 118 to isoleucine 206. Residues cysteine 151, histidine 153, cysteine 168, and histidine 171 each coordinate [2Fe-2S] cluster. An intrachain disulfide couples cysteine 156 to cysteine 170.

Probable multiprotein complex; a catalytic heterodimer of an alpha and beta chain is proposed to associate with additional subunits involved in membrane attachment and electron transfer. Requires [2Fe-2S] cluster as cofactor.

Its subcellular location is the cell membrane. The respiratory membrane-bound nitrate reductase enzyme complex plays a role in generation of metabolic energy by using nitrate as a terminal electron acceptor during anaerobic conditions. Proposed Rieske subunit involved in a protonmotive Q-cycle mechanism-based electron transfer electrons to the beta subunit. This Haloferax mediterranei (strain ATCC 33500 / DSM 1411 / JCM 8866 / NBRC 14739 / NCIMB 2177 / R-4) (Halobacterium mediterranei) protein is Putative respiratory nitrate reductase subunit Rieske (narB).